Consider the following 476-residue polypeptide: Bifunctional protein HldE (476 aa).

The segment at 1–318 is ribokinase; that stretch reads MAQYSAEFKQ…ENAIHARPET (318 aa). 195 to 198 contributes to the ATP binding site; sequence NMSE. Asp264 is a catalytic residue. Residues 344-476 form a cytidylyltransferase region; that stretch reads MTNGCFDILH…VIEKIKLLKD (133 aa).

The protein in the N-terminal section; belongs to the carbohydrate kinase PfkB family. This sequence in the C-terminal section; belongs to the cytidylyltransferase family. As to quaternary structure, homodimer.

It catalyses the reaction D-glycero-beta-D-manno-heptose 7-phosphate + ATP = D-glycero-beta-D-manno-heptose 1,7-bisphosphate + ADP + H(+). The catalysed reaction is D-glycero-beta-D-manno-heptose 1-phosphate + ATP + H(+) = ADP-D-glycero-beta-D-manno-heptose + diphosphate. The protein operates within nucleotide-sugar biosynthesis; ADP-L-glycero-beta-D-manno-heptose biosynthesis; ADP-L-glycero-beta-D-manno-heptose from D-glycero-beta-D-manno-heptose 7-phosphate: step 1/4. It functions in the pathway nucleotide-sugar biosynthesis; ADP-L-glycero-beta-D-manno-heptose biosynthesis; ADP-L-glycero-beta-D-manno-heptose from D-glycero-beta-D-manno-heptose 7-phosphate: step 3/4. Its pathway is bacterial outer membrane biogenesis; LOS core biosynthesis. Functionally, catalyzes the phosphorylation of D-glycero-D-manno-heptose 7-phosphate at the C-1 position to selectively form D-glycero-beta-D-manno-heptose-1,7-bisphosphate. In terms of biological role, catalyzes the ADP transfer from ATP to D-glycero-beta-D-manno-heptose 1-phosphate, yielding ADP-D-glycero-beta-D-manno-heptose. The polypeptide is Bifunctional protein HldE (Haemophilus influenzae (strain ATCC 51907 / DSM 11121 / KW20 / Rd)).